A 350-amino-acid polypeptide reads, in one-letter code: Ceramide synthase 1 (350 aa).

A2 is modified (N-acetylalanine). The next 6 helical transmembrane spans lie at 53-73 (AHLAAPELLLAVLCALGWTAL), 103-123 (AWKLLFYLACWSYCAYLLLGT), 148-168 (IAVAYLLQGSFYCHSIYATVY), 176-196 (SVVMLVHHVVTLLLIASSYAF), 239-259 (VANLGCLSFCFCWFWFRLYWF), and 287-307 (LLLLLMVMNIYWFLYIVAFAA). Residues 97–311 (ARLPESAWKL…IVAFAAKVLT (215 aa)) enclose the TLC domain.

Acetylated. Deacetylation by SIRT3 increases enzyme activity and promotes mitochondrial ceramide accumulation. Expressed in brain, skeletal muscle, heart and perigonadal white adipose tissue.

It is found in the endoplasmic reticulum membrane. It catalyses the reaction a sphingoid base + octadecanoyl-CoA = an N-octadecanoyl-sphingoid base + CoA + H(+). The enzyme catalyses sphinganine + octadecanoyl-CoA = N-(octadecanoyl)-sphinganine + CoA + H(+). The catalysed reaction is hexadecasphinganine + octadecanoyl-CoA = N-octadecanoylhexadecasphinganine + CoA + H(+). It carries out the reaction sphing-4-enine + octadecanoyl-CoA = N-octadecanoylsphing-4-enine + CoA + H(+). It catalyses the reaction heptadecasphing-4-enine + octadecanoyl-CoA = N-octadecanoyl-heptadecasphing-4-enine + CoA + H(+). The enzyme catalyses 2-hydroxyoctadecanoyl-CoA + sphinganine = N-(2-hydroxyoctadecanoyl)-sphinganine + CoA + H(+). The catalysed reaction is eicosanoyl-CoA + sphinganine = N-eicosanoylsphinganine + CoA + H(+). It participates in lipid metabolism; sphingolipid metabolism. Its activity is regulated as follows. Inhibited by fumonisin B1. Its function is as follows. Ceramide synthase that catalyzes the transfer of the acyl chain from acyl-CoA to a sphingoid base, with high selectivity toward stearoyl-CoA (octadecanoyl-CoA; C18:0-CoA). N-acylates sphinganine and sphingosine bases to form dihydroceramides and ceramides in de novo synthesis and salvage pathways, respectively. Plays a predominant role in skeletal muscle in regulating C18 ceramide and dihydroceramide levels with an impact on whole-body glucose metabolism and insulin sensitivity. Protects from diet-induced obesity by suppressing the uptake of glucose in multiple organs in a FGF21-dependent way. Generates C18 ceramides in the brain, playing a critical role in cerebellar development and Purkinje cell function. In response to cellular stress mediates mitophagy, a known defense mechanism against cell transformation and aging. Upon mitochondria fission, generates C18 ceramides that anchor lipidated MAP1LC3B/LC3B-II autophagolysosomes to outer mitochondrial membranes to eliminate damaged mitochondria. This Mus musculus (Mouse) protein is Ceramide synthase 1.